We begin with the raw amino-acid sequence, 977 residues long: Disks large-associated protein 3 (977 aa).

The span at 1–10 (MRGYHGDRGS) shows a compositional bias: basic and acidic residues. Disordered regions lie at residues 1–30 (MRGY…PAAR), 52–90 (AGLG…SSTF), 137–167 (FHTL…ESPS), 181–289 (AKSH…CLDA), 398–417 (AMGD…SPKA), and 529–582 (PGSS…SADG). Low complexity predominate over residues 53-73 (GLGHLSPEGPLSLSEGPSSVG). Serine 58 bears the Phosphoserine mark. Residues 74–85 (PEGGPGGVGAGG) are compositionally biased toward gly residues. Residues 189 to 201 (PGKRDYNGPKAEG) are compositionally biased toward basic and acidic residues. Residues 202–212 (RSSSGGDSYSG) show a composition bias toward low complexity. Positions 221 to 245 (SHHHHHHHHHHHHQSRHGKRSKSKD) are enriched in basic residues. The span at 258-271 (GWWSSDDNLDSDSG) shows a compositional bias: low complexity. Residues serine 404, serine 407, serine 410, and serine 414 each carry the phosphoserine modification. The span at 538–547 (APPPIPPGSQ) shows a compositional bias: pro residues. Residues serine 641 and serine 643 each carry the phosphoserine modification. Disordered regions lie at residues 739 to 788 (EGYP…RTSP) and 906 to 939 (EEKK…RQRQ). Over residues 754–763 (PGPPPVPAPG) the composition is skewed to pro residues. Composition is skewed to basic and acidic residues over residues 767–777 (GRRDSWMERGS) and 925–939 (PVKE…RQRQ). 3 positions are modified to phosphoserine: serine 930, serine 933, and serine 965.

It belongs to the SAPAP family. In terms of assembly, interacts with DLG1 and DLG4/PSD-95. In terms of tissue distribution, expressed in most brain regions.

It localises to the cell membrane. The protein resides in the postsynaptic density. Its subcellular location is the synapse. Functionally, may play a role in the molecular organization of synapses and neuronal cell signaling. Could be an adapter protein linking ion channel to the subsynaptic cytoskeleton. May induce enrichment of PSD-95/SAP90 at the plasma membrane. This Rattus norvegicus (Rat) protein is Disks large-associated protein 3 (Dlgap3).